We begin with the raw amino-acid sequence, 494 residues long: Glutamate--tRNA ligase (494 aa).

Positions 9 to 19 (PSPTGPLHIGS) match the 'HIGH' region motif. The 'KMSKS' region motif lies at 249–253 (KLSKR). Position 252 (K252) interacts with ATP.

The protein belongs to the class-I aminoacyl-tRNA synthetase family. Glutamate--tRNA ligase type 1 subfamily. As to quaternary structure, monomer.

The protein localises to the cytoplasm. It carries out the reaction tRNA(Glu) + L-glutamate + ATP = L-glutamyl-tRNA(Glu) + AMP + diphosphate. Its function is as follows. Catalyzes the attachment of glutamate to tRNA(Glu) in a two-step reaction: glutamate is first activated by ATP to form Glu-AMP and then transferred to the acceptor end of tRNA(Glu). The sequence is that of Glutamate--tRNA ligase from Azobacteroides pseudotrichonymphae genomovar. CFP2.